The following is a 185-amino-acid chain: MQETADRIADAVAALRRGALLAYPTEAVWGLGCDPDDDAALARLIALKQRDPAKGLILIAGDMDQLEPWLAGLDALQRARLAESWPGPNTWLVPDNGRARPLLRGEHTSLAVRVSDHPLVRQLCAAFGGPLVSSSANRAGEPPAMSAADVRAAFGEAVTLLDGALGGYARPSTIRDLQSGETLRR.

Residues 5–185 (ADRIADAVAA…DLQSGETLRR (181 aa)) enclose the YrdC-like domain.

Belongs to the SUA5 family. TsaC subfamily.

The protein resides in the cytoplasm. It catalyses the reaction L-threonine + hydrogencarbonate + ATP = L-threonylcarbamoyladenylate + diphosphate + H2O. Its function is as follows. Required for the formation of a threonylcarbamoyl group on adenosine at position 37 (t(6)A37) in tRNAs that read codons beginning with adenine. Catalyzes the conversion of L-threonine, HCO(3)(-)/CO(2) and ATP to give threonylcarbamoyl-AMP (TC-AMP) as the acyladenylate intermediate, with the release of diphosphate. This Chromohalobacter salexigens (strain ATCC BAA-138 / DSM 3043 / CIP 106854 / NCIMB 13768 / 1H11) protein is Threonylcarbamoyl-AMP synthase.